The primary structure comprises 102 residues: Urease subunit beta (102 aa).

The protein belongs to the urease beta subunit family. Heterotrimer of UreA (gamma), UreB (beta) and UreC (alpha) subunits. Three heterotrimers associate to form the active enzyme.

The protein localises to the cytoplasm. The enzyme catalyses urea + 2 H2O + H(+) = hydrogencarbonate + 2 NH4(+). It participates in nitrogen metabolism; urea degradation; CO(2) and NH(3) from urea (urease route): step 1/1. This Bordetella pertussis (strain Tohama I / ATCC BAA-589 / NCTC 13251) protein is Urease subunit beta.